A 953-amino-acid chain; its full sequence is MCSPEEAALLRLEEVFSATLARINSLVFQPLLEAGPEASDPWGRECLQLLQQLHSSSQQLWDVMEESLHSLRERLRRPEAVGLESLLLLQSADRVLQVHLEYIESYTCCVAVQAFQKAVKRRSEYWRGQRKALRQVLSGLSSEGSVGTALLQALRQPLAHHVQQYVLLLLSLGDTVGECHPTRELVIHAASLFGDLQSFMRQELDQATATQALWPTLSSRLRDVLCTPARRLLQDSQDVPVTVTPLRAERVLLFDDALVLLQGHNIHTFDLKLVWVEPGQDRCTFHLLTPEEGFSFCSKDPQGLVVWQWKVTQAVCQALRGKKDFPVLGAGLEPSEPPTCRCGAYTFHAEGRFCQATYEGEWYWGRPHGKGTLKWPDGRNHVGDFCQGLEHGFGIRLVPQASEDKFDCYKCHWWEGSMCGYGICEYSTSEVYKGYFQEGLRHGFGVLESAPQAPRPLRYTGHWERGQRSGYGVEEDSDRGERYIGMWQADQRHGPGVMVTQAGVCYQGTFQADKMVGPGILLSDDDSLYEGTFTRDLTLVGKGKVTFPNGFTLEGSFGSVSGRGLHTQGVLDTAALPPDPSSTCKRQLGQGVFPVESRWQGVYGAFRDFVRAGCPGDLREALLGFHVQSSRELRKSQEYLCCERTCPEDQAGRMEDLLEELLQHREPEALQQCLRKALSNSLHPLGKLLRTLMLTFQATYAGIGANKHLQGLAQEEVKQHAQELWAAYRGLLQVALQRKGQAPEEDEDAETRDLRVHSLVLPLVLPSFYSELFTLYLLLHEREDSLYSQGITHLSLFPDARLLEFLDVQKHLWPLKDLTLTTNQRYSLVRDKCFLSATECLQKMITTVDPREKLEVLERTYGEIEATVSRVLGREHKLPMDDLLPLLIYVVSRAQIQHLGAEIHLIRDMMDPLHTGGLYDFLLTALESCYEHIQKEDMRLHRLPSRWSSREPW.

MORN repeat units follow at residues 358–380 (YEGEWYWGRPHGKGTLKWPDGRN), 381–403 (HVGDFCQGLEHGFGIRLVPQASE), 409–431 (YKCHWWEGSMCGYGICEYSTSEV), 432–454 (YKGYFQEGLRHGFGVLESAPQAP), 459–481 (YTGHWERGQRSGYGVEEDSDRGE), 483–505 (YIGMWQADQRHGPGVMVTQAGVC), 506–528 (YQGTFQADKMVGPGILLSDDDSL), and 529–552 (YEGTFTRDLTLVGKGKVTFPNGFT). A VPS9 domain is found at 796 to 942 (LFPDARLLEF…IQKEDMRLHR (147 aa)).

As to quaternary structure, homodimer. Forms a heteromeric complex with ALS2. Interacts with ALS2 and RAB5A.

The protein resides in the cytoplasm. Its function is as follows. Acts as a guanine nucleotide exchange factor (GEF) for Rab5 GTPase. Regulates the ALS2-mediated endosome dynamics. This is ALS2 C-terminal-like protein (ALS2CL) from Bos taurus (Bovine).